A 362-amino-acid chain; its full sequence is Heat-inducible transcription repressor HrcA (362 aa).

This sequence belongs to the HrcA family.

Functionally, negative regulator of class I heat shock genes (grpE-dnaK-dnaJ and groELS operons). Prevents heat-shock induction of these operons. This Bradyrhizobium sp. (strain ORS 278) protein is Heat-inducible transcription repressor HrcA.